The following is a 142-amino-acid chain: Large ribosomal subunit protein uL11 (142 aa).

Belongs to the universal ribosomal protein uL11 family. Part of the ribosomal stalk of the 50S ribosomal subunit. Interacts with L10 and the large rRNA to form the base of the stalk. L10 forms an elongated spine to which L12 dimers bind in a sequential fashion forming a multimeric L10(L12)X complex. In terms of processing, one or more lysine residues are methylated.

In terms of biological role, forms part of the ribosomal stalk which helps the ribosome interact with GTP-bound translation factors. In Mycobacterium leprae (strain Br4923), this protein is Large ribosomal subunit protein uL11.